A 179-amino-acid polypeptide reads, in one-letter code: SCAN domain-containing protein 1 (179 aa).

Positions 1–108 (MAATEPILAA…GSRLGPETFR (108 aa)) are disordered. The span at 60-80 (AIPTPQAAASAAPELPLGPAP) shows a compositional bias: low complexity. One can recognise an SCAN box domain in the interval 108–166 (RQRFRQFRYQDAAGPREAFRQLRELSRQWLRPDIRTKEQIVEMLVQEQLLAILPEAARA).

As to quaternary structure, interacts with ZNF202.

The protein localises to the nucleus. In terms of biological role, may regulate transcriptional activity. The sequence is that of SCAN domain-containing protein 1 (SCAND1) from Pongo pygmaeus (Bornean orangutan).